The chain runs to 283 residues: Diaminopimelate epimerase (283 aa).

Substrate is bound by residues Asn-13 and Asn-67. Catalysis depends on Cys-76, which acts as the Proton donor. Substrate-binding positions include 77-78 (GN), Asn-166, Asn-199, and 217-218 (ER). The Proton acceptor role is filled by Cys-226. 227 to 228 (GT) provides a ligand contact to substrate.

The protein belongs to the diaminopimelate epimerase family. As to quaternary structure, homodimer.

It is found in the cytoplasm. The enzyme catalyses (2S,6S)-2,6-diaminopimelate = meso-2,6-diaminopimelate. It participates in amino-acid biosynthesis; L-lysine biosynthesis via DAP pathway; DL-2,6-diaminopimelate from LL-2,6-diaminopimelate: step 1/1. Its function is as follows. Catalyzes the stereoinversion of LL-2,6-diaminopimelate (L,L-DAP) to meso-diaminopimelate (meso-DAP), a precursor of L-lysine and an essential component of the bacterial peptidoglycan. This chain is Diaminopimelate epimerase, found in Desulforapulum autotrophicum (strain ATCC 43914 / DSM 3382 / VKM B-1955 / HRM2) (Desulfobacterium autotrophicum).